We begin with the raw amino-acid sequence, 360 residues long: Protein Wnt-2 (360 aa).

The signal sequence occupies residues 1 to 25; the sequence is MNAPLGGIWLWLPLLLTWLTPEVSS. Intrachain disulfides connect Cys-76–Cys-87, Cys-127–Cys-135, Cys-137–Cys-157, Cys-206–Cys-220, Cys-208–Cys-215, Cys-278–Cys-309, Cys-294–Cys-304, Cys-308–Cys-348, Cys-324–Cys-339, Cys-326–Cys-336, and Cys-331–Cys-332. Ser-212 carries the O-palmitoleoyl serine; by PORCN lipid modification. N-linked (GlcNAc...) asparagine glycosylation is present at Asn-295.

This sequence belongs to the Wnt family. In terms of processing, palmitoleoylation is required for efficient binding to frizzled receptors. Depalmitoleoylation leads to Wnt signaling pathway inhibition.

Its subcellular location is the secreted. It is found in the extracellular space. It localises to the extracellular matrix. Functionally, ligand for members of the frizzled family of seven transmembrane receptors. Functions in the canonical Wnt signaling pathway that results in activation of transcription factors of the TCF/LEF family. This Dasypus novemcinctus (Nine-banded armadillo) protein is Protein Wnt-2 (WNT2).